We begin with the raw amino-acid sequence, 541 residues long: CTP synthase (541 aa).

The tract at residues 1–271 (MVGKLNPTRF…DTQILKHFDV (271 aa)) is amidoligase domain. Ser19 contacts CTP. Residue Ser19 participates in UTP binding. Residues 20 to 25 (SLGKGL) and Asp77 contribute to the ATP site. 2 residues coordinate Mg(2+): Asp77 and Glu145. Residues 152 to 154 (DIE), 192 to 197 (KTKPTQ), and Lys228 contribute to the CTP site. Residues 192 to 197 (KTKPTQ) and Lys228 each bind UTP. In terms of domain architecture, Glutamine amidotransferase type-1 spans 296–537 (VIAIVGKYVT…VTSTLQVKKA (242 aa)). Gly355 contacts L-glutamine. Cys382 acts as the Nucleophile; for glutamine hydrolysis in catalysis. L-glutamine-binding positions include 383–386 (LGMQ), Glu406, and Arg465. Residues His510 and Glu512 contribute to the active site.

The protein belongs to the CTP synthase family. In terms of assembly, homotetramer.

It carries out the reaction UTP + L-glutamine + ATP + H2O = CTP + L-glutamate + ADP + phosphate + 2 H(+). The enzyme catalyses L-glutamine + H2O = L-glutamate + NH4(+). The catalysed reaction is UTP + NH4(+) + ATP = CTP + ADP + phosphate + 2 H(+). The protein operates within pyrimidine metabolism; CTP biosynthesis via de novo pathway; CTP from UDP: step 2/2. Allosterically activated by GTP, when glutamine is the substrate; GTP has no effect on the reaction when ammonia is the substrate. The allosteric effector GTP functions by stabilizing the protein conformation that binds the tetrahedral intermediate(s) formed during glutamine hydrolysis. Inhibited by the product CTP, via allosteric rather than competitive inhibition. Its function is as follows. Catalyzes the ATP-dependent amination of UTP to CTP with either L-glutamine or ammonia as the source of nitrogen. Regulates intracellular CTP levels through interactions with the four ribonucleotide triphosphates. The protein is CTP synthase of Anaplasma phagocytophilum (strain HZ).